Reading from the N-terminus, the 704-residue chain is Elongation factor G (704 aa).

Residues 8 to 290 (ARYRNIGISA…AVIDYLPAPT (283 aa)) enclose the tr-type G domain. GTP is bound by residues 17-24 (AHIDAGKT), 88-92 (DTPGH), and 142-145 (NKMD).

This sequence belongs to the TRAFAC class translation factor GTPase superfamily. Classic translation factor GTPase family. EF-G/EF-2 subfamily.

The protein localises to the cytoplasm. Catalyzes the GTP-dependent ribosomal translocation step during translation elongation. During this step, the ribosome changes from the pre-translocational (PRE) to the post-translocational (POST) state as the newly formed A-site-bound peptidyl-tRNA and P-site-bound deacylated tRNA move to the P and E sites, respectively. Catalyzes the coordinated movement of the two tRNA molecules, the mRNA and conformational changes in the ribosome. The polypeptide is Elongation factor G (Pectobacterium atrosepticum (strain SCRI 1043 / ATCC BAA-672) (Erwinia carotovora subsp. atroseptica)).